Consider the following 468-residue polypeptide: ATP synthase subunit beta (468 aa).

155-162 (GGAGVGKT) provides a ligand contact to ATP.

This sequence belongs to the ATPase alpha/beta chains family. As to quaternary structure, F-type ATPases have 2 components, CF(1) - the catalytic core - and CF(0) - the membrane proton channel. CF(1) has five subunits: alpha(3), beta(3), gamma(1), delta(1), epsilon(1). CF(0) has three main subunits: a(1), b(2) and c(9-12). The alpha and beta chains form an alternating ring which encloses part of the gamma chain. CF(1) is attached to CF(0) by a central stalk formed by the gamma and epsilon chains, while a peripheral stalk is formed by the delta and b chains.

It localises to the cell membrane. The catalysed reaction is ATP + H2O + 4 H(+)(in) = ADP + phosphate + 5 H(+)(out). Produces ATP from ADP in the presence of a proton gradient across the membrane. The catalytic sites are hosted primarily by the beta subunits. The protein is ATP synthase subunit beta of Streptococcus pneumoniae (strain Taiwan19F-14).